A 252-amino-acid chain; its full sequence is MSLPATFDLTPEDAQLLLAANTHLGARNVQVHQEPYVFNARPDGVHVINVGKTWEKLVLAARIIAAIPNPEDVVAISSRTYGQRAVLKFAAHTGATPIAGRFTPGSFTNYITRSFKEPRLVIVTDPRLDAQAIKEASYVNIPVIALTDLDSPSEFVDVAIPCNNRGKHSIGLIWYLLAREVLRLRGALVDRTQPWSIMPDLYFYRNPEEVEQVAEEAAAAEEGEEEEVKEEVTEGQAEATEWAEENADNVEW.

Position 2 is an N-acetylserine (Ser-2). Acidic residues-rich tracts occupy residues 213–229 (VAEE…EEVK) and 241–252 (EWAEENADNVEW). The segment at 213–252 (VAEEAAAAEEGEEEEVKEEVTEGQAEATEWAEENADNVEW) is disordered.

The protein belongs to the universal ribosomal protein uS2 family. As to quaternary structure, component of the small ribosomal subunit. Mature ribosomes consist of a small (40S) and a large (60S) subunit. The 40S subunit contains about 33 different proteins and 1 molecule of RNA (18S). The 60S subunit contains about 49 different proteins and 3 molecules of RNA (25S, 5.8S and 5S). Interacts with RPS21.

The protein resides in the cytoplasm. Required for the assembly and/or stability of the 40S ribosomal subunit. Required for the processing of the 20S rRNA-precursor to mature 18S rRNA in a late step of the maturation of 40S ribosomal subunits. The protein is Small ribosomal subunit protein uS2B of Saccharomyces cerevisiae (strain RM11-1a) (Baker's yeast).